We begin with the raw amino-acid sequence, 100 residues long: Elastin (100 aa).

A 4-hydroxyproline mark is found at proline 72 and proline 86. A disulfide bridge connects residues cysteine 90 and cysteine 95.

This sequence belongs to the elastin family. The polymeric elastin chains are cross-linked together into an extensible 3D network. Forms a ternary complex with BGN and MFAP2. Interacts with MFAP2 via divalent cations (calcium &gt; magnesium &gt; manganese) in a dose-dependent and saturating manner. Interacts with FBLN5 and FBN1. Forms a ternary complex with FBN1 and FBLN2 or FBLN5. Interacts with MFAP4 in a Ca (2+)-dependent manner; this interaction promotes ELN self-assembly. Interacts with EFEMP2 with moderate affinity. In terms of processing, elastin is formed through the cross-linking of its soluble precursor tropoelastin. Cross-linking is initiated through the action of lysyl oxidase on exposed lysines to form allysine. Subsequent spontaneous condensation reactions with other allysine or unmodified lysine residues result in various bi-, tri-, and tetrafunctional cross-links. The most abundant cross-links in mature elastin fibers are lysinonorleucine, allysine aldol, desmosine, and isodesmosine. Post-translationally, hydroxylation on proline residues within the sequence motif, GXPG, is most likely to be 4-hydroxy as this fits the requirement for 4-hydroxylation in vertebrates.

Its subcellular location is the secreted. It is found in the extracellular space. The protein localises to the extracellular matrix. Its function is as follows. Major structural protein of tissues such as aorta and nuchal ligament, which must expand rapidly and recover completely. Molecular determinant of the late arterial morphogenesis, stabilizing arterial structure by regulating proliferation and organization of vascular smooth muscle. The protein is Elastin (ELN) of Ovis aries (Sheep).